A 137-amino-acid chain; its full sequence is Large ribosomal subunit protein uL16 (137 aa).

The protein belongs to the universal ribosomal protein uL16 family. As to quaternary structure, part of the 50S ribosomal subunit.

Its function is as follows. Binds 23S rRNA and is also seen to make contacts with the A and possibly P site tRNAs. The sequence is that of Large ribosomal subunit protein uL16 from Aromatoleum aromaticum (strain DSM 19018 / LMG 30748 / EbN1) (Azoarcus sp. (strain EbN1)).